Here is a 304-residue protein sequence, read N- to C-terminus: NAD kinase (304 aa).

The active-site Proton acceptor is Asp77. NAD(+)-binding positions include 77–78, Arg82, 151–152, Arg162, Asp181, and 192–197; these read DG, NE, and TAYSFS.

This sequence belongs to the NAD kinase family. A divalent metal cation is required as a cofactor.

Its subcellular location is the cytoplasm. The enzyme catalyses NAD(+) + ATP = ADP + NADP(+) + H(+). Its function is as follows. Involved in the regulation of the intracellular balance of NAD and NADP, and is a key enzyme in the biosynthesis of NADP. Catalyzes specifically the phosphorylation on 2'-hydroxyl of the adenosine moiety of NAD to yield NADP. This is NAD kinase from Leifsonia xyli subsp. xyli (strain CTCB07).